A 96-amino-acid polypeptide reads, in one-letter code: Secretoglobin family 2B member 2 (96 aa).

Residues 1 to 23 (MRVTSATCALLLALICSVQLGDA) form the signal peptide.

This sequence belongs to the secretoglobin family.

It is found in the secreted. This chain is Secretoglobin family 2B member 2 (SCGB2B2), found in Homo sapiens (Human).